The following is a 239-amino-acid chain: DNA oxidative demethylase ALKBH2 (239 aa).

The short motif at 3–7 is the PCNA-binding element; that stretch reads KFLVR. Positions 11–32 are disordered; sequence RDLQGGGEEPAPTGGASGDLKS. Substrate is bound by residues 80 to 82 and 100 to 102; these read FGK and YTF. Positions 130-235 constitute a Fe2OG dioxygenase domain; that stretch reads TFNFVLVNRY…RVNLTFRKIL (106 aa). 3 residues coordinate 2-oxoglutarate: Asn137, Tyr139, and His149. The Fe cation site is built by His149 and Asp151. Asp152 provides a ligand contact to substrate. 4 residues coordinate 2-oxoglutarate: His214, Arg226, Thr230, and Arg232. His214 is a binding site for Fe cation.

It belongs to the alkB family. As to quaternary structure, interacts with PCNA homotrimer; this interaction is enhanced during the S-phase of the cell cycle. Interacts with nucleolar proteins NCL, UBTF and NPM1. Interacts with XRCC5-XRCC6 heterodimer. Requires Fe(2+) as cofactor. In terms of tissue distribution, detected in liver, testis and kidney (at protein level). Detected in heart and testis.

The protein resides in the nucleus. It is found in the nucleolus. Its subcellular location is the nucleoplasm. It catalyses the reaction a methylated nucleobase within DNA + 2-oxoglutarate + O2 = a nucleobase within DNA + formaldehyde + succinate + CO2. The enzyme catalyses an N(1)-methyl-2'-deoxyadenosine in double-stranded DNA + 2-oxoglutarate + O2 = a 2'-deoxyadenosine in double-stranded DNA + formaldehyde + succinate + CO2 + H(+). It carries out the reaction an N(1)-methyl-2'-deoxyadenosine in single-stranded DNA + 2-oxoglutarate + O2 = a 2'-deoxyadenosine in single-stranded DNA + formaldehyde + succinate + CO2 + H(+). The catalysed reaction is an N(3)-methyl-2'-deoxycytidine in double-stranded DNA + 2-oxoglutarate + O2 = a 2'-deoxycytidine in double-stranded DNA + formaldehyde + succinate + CO2 + H(+). It catalyses the reaction an N(3)-methyl-2'-deoxycytidine in single-stranded DNA + 2-oxoglutarate + O2 = a 2'-deoxycytidine in single-stranded DNA + formaldehyde + succinate + CO2 + H(+). The enzyme catalyses a 1,N(6)-etheno-2'-deoxyadenosine in double-stranded DNA + 2-oxoglutarate + O2 + H2O = a 2'-deoxyadenosine in double-stranded DNA + glyoxal + succinate + CO2. It carries out the reaction a 1,N(6)-etheno-2'-deoxyadenosine in single-stranded DNA + 2-oxoglutarate + O2 + H2O = a 2'-deoxyadenosine in single-stranded DNA + glyoxal + succinate + CO2. The catalysed reaction is a 3,N(4)-etheno-2'-deoxycytidine in double-stranded DNA + 2-oxoglutarate + O2 + H2O = a 2'-deoxycytidine in double-stranded DNA + glyoxal + succinate + CO2. It catalyses the reaction a 3,N(4)-etheno-2'-deoxycytidine in single-stranded DNA + 2-oxoglutarate + O2 + H2O = a 2'-deoxycytidine in single-stranded DNA + glyoxal + succinate + CO2. The enzyme catalyses a 1,N(2)-etheno-2'-deoxyguanosine in double-stranded DNA + 2-oxoglutarate + O2 + H2O = a 2'-deoxyguanosine in double-stranded DNA + glyoxal + succinate + CO2. Activated by magnesium ions. Functionally, dioxygenase that repairs alkylated nucleic acid bases by direct reversal oxidative dealkylation. Can process both double-stranded (ds) and single-stranded (ss) DNA substrates, with a strong preference for dsDNA. Uses molecular oxygen, 2-oxoglutarate and iron as cofactors to oxidize the alkyl groups that are subsequently released as aldehydes, regenerating the undamaged bases. Probes the base pair stability, locates a weakened base pair and flips the damaged base to accommodate the lesion in its active site for efficient catalysis. Repairs monoalkylated bases, specifically N1-methyladenine and N3-methylcytosine, as well as higher order alkyl adducts such as bases modified with exocyclic bridged adducts known as etheno adducts including 1,N6-ethenoadenine, 3,N4-ethenocytosine and 1,N2-ethenoguanine. Acts as a gatekeeper of genomic integrity under alkylation stress. Efficiently repairs alkylated lesions in ribosomal DNA (rDNA). These lesions can cause ss- and dsDNA strand breaks that severely impair rDNA transcription. In a response mechanism to DNA damage, associates with PCNA at replication forks to repair alkylated adducts prior to replication. In Mus musculus (Mouse), this protein is DNA oxidative demethylase ALKBH2 (Alkbh2).